Here is an 887-residue protein sequence, read N- to C-terminus: 3-hydroxy-3-methylglutaryl-coenzyme A reductase (887 aa).

The Cytoplasmic segment spans residues 1-9 (MLSRLFRMH). A helical membrane pass occupies residues 10 to 39 (GLFVASHPWEVIVGTVTLTICMMSMNMFTG). The Lumenal portion of the chain corresponds to 40–56 (NNKICGWNYECPKFEED). Residues 57–78 (VLSSDIIILTITRCIAILYIYF) form a helical membrane-spanning segment. The SSD domain occupies 61–218 (DIIILTITRC…MTFFPACVSL (158 aa)). The INSIG-binding motif motif lies at 75 to 78 (YIYF). The Cytoplasmic segment spans residues 79–89 (QFQNLRQLGSK). A Glycyl lysine isopeptide (Lys-Gly) (interchain with G-Cter in ubiquitin) cross-link involves residue K89. Residues 90–114 (YILGIAGLFTIFSSFVFSTVVIHFL) traverse the membrane as a helical segment. Residues 115–123 (DKELTGLNE) are Lumenal-facing. Residues 124–149 (ALPFFLLLIDLSRASALAKFALSSNS) form a helical membrane-spanning segment. Over 150–159 (QDEVRENIAR) the chain is Cytoplasmic. The chain crosses the membrane as a helical span at residues 160–187 (GMAILGPTFTLDALVECLVIGVGTMSGV). Topologically, residues 188 to 191 (RQLE) are lumenal. A helical transmembrane segment spans residues 192–220 (IMCCFGCMSVLANYFVFMTFFPACVSLVL). The Cytoplasmic portion of the chain corresponds to 221–248 (ELSRESREGRPIWQLSHFARVLEEEENK). A Glycyl lysine isopeptide (Lys-Gly) (interchain with G-Cter in ubiquitin) cross-link involves residue K248. A helical membrane pass occupies residues 249–275 (PNPVTQRVKMIMSLGLVLVHAHSRWIA). The Lumenal segment spans residues 276 to 314 (DPSPQNSTAEQAKVSLGLDEDVSKRIEPSVSLWQFYLSK). N-linked (GlcNAc...) asparagine glycosylation is present at N281. Residues 315–339 (MISMDIEQVITLSLAFLLAVKYIFF) form a helical membrane-spanning segment. Topologically, residues 340-887 (EQAETESTLS…LQGTCTKKAA (548 aa)) are cytoplasmic. Residues E558, K690, and D766 each act as charge relay system in the active site. The Proton donor role is filled by H865. A Phosphoserine modification is found at S871.

This sequence belongs to the HMG-CoA reductase family. Homotetramer. Homodimer. Interacts (via its SSD) with INSIG1; the interaction, accelerated by sterols, leads to the recruitment of HMGCR to AMFR/gp78 for its ubiquitination by the sterol-mediated ERAD pathway. Interacts with UBIAD1. Undergoes sterol-mediated ubiquitination and ER-associated degradation (ERAD). Accumulation of sterols in the endoplasmic reticulum (ER) membrane, triggers binding of the reductase to the ER membrane protein INSIG1 or INSIG2. The INSIG1 binding leads to the recruitment of the ubiquitin ligase, AMFR/gp78, RNF139 or RNF145, initiating ubiquitination of the reductase. The ubiquitinated reductase is then extracted from the ER membrane and delivered to cytosolic 26S proteosomes by a mechanism probably mediated by the ATPase Valosin-containing protein VCP/p97. The INSIG2-binding leads to the recruitment of the ubiquitin ligase RNF139, initiating ubiquitination of the reductase. Lys-248 is the main site of ubiquitination. Ubiquitination is enhanced by the presence of a geranylgeranylated protein. Post-translationally, N-glycosylated. Deglycosylated by NGLY1 on release from the endoplasmic reticulum (ER) in a sterol-mediated manner. In terms of processing, phosphorylated. Phosphorylation at Ser-871 reduces the catalytic activity.

The protein resides in the endoplasmic reticulum membrane. Its subcellular location is the peroxisome membrane. It carries out the reaction (R)-mevalonate + 2 NADP(+) + CoA = (3S)-3-hydroxy-3-methylglutaryl-CoA + 2 NADPH + 2 H(+). It functions in the pathway metabolic intermediate biosynthesis; (R)-mevalonate biosynthesis; (R)-mevalonate from acetyl-CoA: step 3/3. Its activity is regulated as follows. Regulated by a negative feedback mechanism through sterols and non-sterol metabolites derived from mevalonate. Phosphorylation at Ser-871 down-regulates the catalytic activity. Catalyzes the conversion of (3S)-hydroxy-3-methylglutaryl-CoA (HMG-CoA) to mevalonic acid, the rate-limiting step in the synthesis of cholesterol and other isoprenoids, thus plays a critical role in cellular cholesterol homeostasis. In Mus musculus (Mouse), this protein is 3-hydroxy-3-methylglutaryl-coenzyme A reductase (Hmgcr).